The primary structure comprises 410 residues: Putative nickel insertion protein (410 aa).

Belongs to the LarC family.

The chain is Putative nickel insertion protein from Cyanothece sp. (strain PCC 7425 / ATCC 29141).